The primary structure comprises 213 residues: Ras-related protein Rab-39B (213 aa).

7 residues coordinate GTP: Ser-17, Gly-20, Lys-21, Ser-22, Cys-23, Ser-37, and Thr-40. Ser-22 provides a ligand contact to Mg(2+). A switch-I region spans residues 35–43 (QVSDPTVGV). The Mg(2+) site is built by Thr-40 and Asp-64. Residues Gly-67, His-123, Lys-124, Asp-126, Ala-154, and Arg-155 each coordinate GTP. The switch-II stretch occupies residues 67–83 (GQERFRSITRAYYRNSV). Ser-201 bears the Phosphoserine mark. S-geranylgeranyl cysteine attachment occurs at residues Cys-211 and Cys-213. Cys-213 is subject to Cysteine methyl ester.

The protein belongs to the small GTPase superfamily. Rab family. As to quaternary structure, interacts (GDP-bound) with C9orf72; C9orf72 in complex with SMCR8 acts as a GEF for RAB39B. Interacts (in GTP-bound form) with PICK1 (via PDZ domain); a PICK1 homodimer may allow simultaneous association of RAB39B and GRIA2 to PICK1 which is involved in GRIA2 trafficking. Interacts with isoform c of RASSF1; the interaction is strong. Interacts with isoform a of RASSF1; the interaction is weak. Interacts with the DLG4/PSD-95. Interacts (GTP-bound) with HOPS complex components VPS39 and VPS41. Requires Mg(2+) as cofactor. As to expression, highly expressed in the brain.

The protein resides in the cell membrane. It is found in the cytoplasmic vesicle membrane. It localises to the golgi apparatus. The protein localises to the cytoplasmic vesicle. Its subcellular location is the autophagosome membrane. The protein resides in the autolysosome membrane. It carries out the reaction GTP + H2O = GDP + phosphate + H(+). With respect to regulation, regulated by guanine nucleotide exchange factors (GEFs) including C9orf72-SMCR8 complex, which promote the exchange of bound GDP for free GTP. Regulated by GTPase activating proteins (GAPs) which increase the GTP hydrolysis activity. Inhibited by GDP dissociation inhibitors (GDIs). Its function is as follows. The small GTPases Rab are key regulators of intracellular membrane trafficking, from the formation of transport vesicles to their fusion with membranes. Rabs cycle between an inactive GDP-bound form and an active GTP-bound form that is able to recruit to membranes different sets of downstream effectors directly responsible for vesicle formation, movement, tethering and fusion. RAB39B is involved in autophagy and may function in autophagosome formation. Binds downstream effector PICK1 to ensure selectively GRIA2 exit from the endoplasmic reticulum to the Golgi and to regulate AMPAR composition at the post-synapses and thus synaptic transmission. May regulate the homeostasis of SNCA/alpha-synuclein. This Homo sapiens (Human) protein is Ras-related protein Rab-39B.